The chain runs to 93 residues: Small ribosomal subunit protein bS18 (93 aa).

This sequence belongs to the bacterial ribosomal protein bS18 family. In terms of assembly, part of the 30S ribosomal subunit. Forms a tight heterodimer with protein bS6.

In terms of biological role, binds as a heterodimer with protein bS6 to the central domain of the 16S rRNA, where it helps stabilize the platform of the 30S subunit. The sequence is that of Small ribosomal subunit protein bS18 from Acidovorax ebreus (strain TPSY) (Diaphorobacter sp. (strain TPSY)).